Reading from the N-terminus, the 558-residue chain is Protein NRT1/ PTR FAMILY 2.7 (558 aa).

Helical transmembrane passes span 31 to 51 (FMIA…LNLI), 63 to 83 (IAAA…PAVA), 90 to 110 (FFGT…GVAL), 140 to 162 (LGVL…FTLA), 178 to 198 (FFNW…TAIV), 204 to 224 (ISWT…FLVF), 319 to 339 (IIPL…QLSL), 357 to 377 (IPAG…IIVN), 399 to 419 (VGIG…VEAK), 440 to 460 (VLWL…HFPG), 479 to 499 (SITS…IDLI), and 518 to 538 (VYWI…VCSW).

Belongs to the major facilitator superfamily. Proton-dependent oligopeptide transporter (POT/PTR) (TC 2.A.17) family. Expressed in shoots and in the cortex of mature roots. Not expressed in root tip meristematic cells.

The protein localises to the cell membrane. Functionally, transporter involved in a passive nitrate efflux. Not competent for chloride transport. In Arabidopsis thaliana (Mouse-ear cress), this protein is Protein NRT1/ PTR FAMILY 2.7 (NPF2.7).